A 492-amino-acid polypeptide reads, in one-letter code: Transmembrane protein 104 homolog (492 aa).

The Cytoplasmic portion of the chain corresponds to 1–18 (MQSNTDSSGTSGTYSQTV). A helical membrane pass occupies residues 19–39 (GLLYVFNLIVGTGALALPKAF). Residues 40-45 (QSAGWL) are Extracellular-facing. A helical transmembrane segment spans residues 46–66 (LSISLLTFSAFMSYVAATFVI). Over 67-114 (EALSVANAVLSKKRRVEYDDVVVADGPSTFEIAKKVEVSEMASMFLSK) the chain is Cytoplasmic. A helical membrane pass occupies residues 115-135 (VSLVFSYFAIIIYLFGDLAIY). Over 136-177 (STTVPKSAMNIVCSTINATIVKSSDPCHESWPEILTRMTVYR) the chain is Extracellular. N-linked (GlcNAc...) asparagine glycosylation occurs at Asn-152. Residues 178-198 (FFVIVFVVVVCLPMVIAGITK) form a helical membrane-spanning segment. Residues 199-210 (TRHIQIMTTLSR) lie on the Cytoplasmic side of the membrane. The chain crosses the membrane as a helical span at residues 211 to 231 (WAAFILMISLATMQLSSQGAA). Residues 232–238 (AHPPAYN) are Extracellular-facing. A helical membrane pass occupies residues 239–259 (FHGFGSLFGCAVYAFMCHHSI). Over 260–275 (PSLITPMRTKENVFGK) the chain is Cytoplasmic. A helical transmembrane segment spans residues 276–296 (IAVVYGIVGVFYFTLSLTGAF). Over 297–325 (AFEHVQDIYTLNFLHDDNTSLVYSIIDYF) the chain is Extracellular. An N-linked (GlcNAc...) asparagine glycan is attached at Asn-314. A helical transmembrane segment spans residues 326–346 (LALFPIITLTSSYPIIALTLI). Residues 347–391 (NNFKVVKDILCPKTGQENESLLEADNQVEDNDTDDEREARNGNPK) are Cytoplasmic-facing. Residues 367–382 (LLEADNQVEDNDTDDE) show a composition bias toward acidic residues. Residues 367–387 (LLEADNQVEDNDTDDEREARN) are disordered. A helical membrane pass occupies residues 392–412 (TIFDVLVPTLVLALPTFLSLL). Topologically, residues 413-415 (TDD) are extracellular. The helical transmembrane segment at 416–436 (MLLLASITGSFPGVAVQFAIP) threads the bilayer. The Cytoplasmic portion of the chain corresponds to 437 to 466 (CLLVTAARKHARSVLNFPVPRKNNSPFQSR). The chain crosses the membrane as a helical span at residues 467-487 (FWIMLISSWAGFSMIMVLLNL). Residues 488 to 492 (VGVKF) are Extracellular-facing.

This sequence belongs to the TMEM104 family.

Its subcellular location is the membrane. This is Transmembrane protein 104 homolog from Caenorhabditis briggsae.